The following is a 524-amino-acid chain: RNA-splicing ligase RtcB homolog 2 (524 aa).

Aspartate 141, cysteine 144, histidine 249, histidine 281, and histidine 372 together coordinate Mn(2+). A GMP-binding site is contributed by 248–252 (NHYLE). GMP-binding positions include 372–373 (HN), 421–424 (GGSM), serine 428, 447–450 (HGAG), and lysine 523. Histidine 447 (GMP-histidine intermediate) is an active-site residue.

The protein belongs to the RtcB family. Catalytic component of the tRNA-splicing ligase complex. Requires Mn(2+) as cofactor.

It catalyses the reaction a 3'-end 3'-phospho-ribonucleotide-RNA + a 5'-end dephospho-ribonucleoside-RNA + GTP = a ribonucleotidyl-ribonucleotide-RNA + GMP + diphosphate. It carries out the reaction a 3'-end 2',3'-cyclophospho-ribonucleotide-RNA + a 5'-end dephospho-ribonucleoside-RNA + GTP + H2O = a ribonucleotidyl-ribonucleotide-RNA + GMP + diphosphate + H(+). Its function is as follows. Catalytic subunit of the tRNA-splicing ligase complex that acts by directly joining spliced tRNA halves to mature-sized tRNAs by incorporating the precursor-derived splice junction phosphate into the mature tRNA as a canonical 3',5'-phosphodiester. May act as an RNA ligase with broad substrate specificity, and may function toward other RNAs. The chain is RNA-splicing ligase RtcB homolog 2 from Entamoeba dispar (strain ATCC PRA-260 / SAW760).